The primary structure comprises 246 residues: tRNA pseudouridine synthase A (246 aa).

The Nucleophile role is filled by Asp-52. Tyr-111 contacts substrate.

It belongs to the tRNA pseudouridine synthase TruA family. In terms of assembly, homodimer.

The catalysed reaction is uridine(38/39/40) in tRNA = pseudouridine(38/39/40) in tRNA. Its function is as follows. Formation of pseudouridine at positions 38, 39 and 40 in the anticodon stem and loop of transfer RNAs. The chain is tRNA pseudouridine synthase A from Borrelia garinii subsp. bavariensis (strain ATCC BAA-2496 / DSM 23469 / PBi) (Borreliella bavariensis).